We begin with the raw amino-acid sequence, 501 residues long: TNF receptor-associated factor 2 (501 aa).

Ala-2 carries the post-translational modification N-acetylalanine. Phosphoserine is present on Ser-5. Thr-7 carries the post-translational modification Phosphothreonine. The residue at position 11 (Ser-11) is a Phosphoserine. Residue Thr-22 is modified to Phosphothreonine. Lys-31 is covalently cross-linked (Glycyl lysine isopeptide (Lys-Gly) (interchain with G-Cter in ubiquitin)). An RING-type zinc finger spans residues Cys-34–Val-73. Thr-117 is subject to Phosphothreonine; by PKC. 2 TRAF-type zinc fingers span residues Cys-124 to Glu-180 and Val-177 to Gln-233. The interval Glu-283–Val-293 is important for interaction with BIRC2 and BIRC3. The stretch at Val-298 to Ser-348 forms a coiled coil. A Glycyl lysine isopeptide (Lys-Gly) (interchain with G-Cter in ubiquitin) cross-link involves residue Lys-320. Residues Asp-351–Val-496 form the MATH domain.

It belongs to the TNF receptor-associated factor family. A subfamily. Homotrimer. Heterotrimer with TRAF1. Heterotrimer with TRAF3 (via TRAF domain). The domain containing the RING-type and the first TRAF-type zinc finger can also form homodimers (in vitro). Interacts with TNFRSF1B/TNFR2. Interacts with TNFRSF5/CD40. Interacts with TNFRSF4, TNFRSF7/CD27, TNFRSF8/CD30, TNFRSF9/CD137, TNFRSF11A/RANK, TNFRSF13B/TACI, TNFRSF14, TNFRSF16/NGFR, TNFRSF17/BCMA, TNFRSF18/AITR, TNFRSF19/TROY, TNFRSF19L/RELT and EDAR. Stimulation of TNF-alpha receptor TNFRSF1A leads to the formation of two distinct signaling complexes. Plasma membrane-bound complex I is composed of TNFRSF1A, TRADD, RIPK1, TRAF2 and BIRC2/c-IAP1 or BIRC3 which interacts with CHUCK/IKK-alpha, IKBKB/IKK-beta and IKBKG/IKK-gamma promoting cell survival. Subsequently, TRADD, RIPK1 and TRAF2 dissociate from TNFRSF1A and form cytoplasmic complex II with FADD and caspase CASP8 promoting cell apoptosis. Interacts with TRADD. Identified in a complex with TNFRSF1A, RIPK1 and IKBKB/IKK-beta. Interacts with RIPK2. Interacts with BIRC2 and BIRC3 N-terminus; a single BIRC2 or BIRC3 molecule interacts with a heterotrimer formed by TRAF1 and TRAF2, or a TRAF2 homotrimer. Identified in a complex composed of TRAF2, TRAF3, BIRC2 and BIRC3. Interacts with BIRC2; the interaction promotes BIRC2 stability. Interaction with BIRC2 and/or BIRC3 is essential for ubiquitination of IKBKE, degradation of NFKBIA and activation of NF-kappa-B. Within complex I, phosphorylated TRAF2 interacts (via 'Lys-63'-linked polyubiquitin chains) with CHUCK/IKK-alpha, IKBKB/IKK-beta, IKBKG/IKK-gamma TAB2, TAB3 and TAK1 in response to TNF-alpha stimulation. Within complex I, interacts with UXT isoform 1 (via TPQE motif); the interaction prevents the recruitment of FADD and CASP8/caspase 8 to complex I. Forms a complex composed of TNFRSF8/CD30 or TNFRSF1B/TNFR2, and TRAF1, TRAF2 and E3 ligase TRAIP. Within the complex, interacts with TRAIP; the interaction inhibits TRAF2-mediated NF-kappa B activation. Component of a complex composed of TANK and TBK1. Interacts with TRPC4AP. Interacts with MAP3K1/MEKK1, MAP3K5/ASK1 and MAP3K11/MLK3 in response to TNF-alpha stimulation; the interaction leads to JNK activation and interaction with MAP3K5 is inhibited by PRMT1. Component of a complex composed of MAP3K14/NIK BIRC3 and TRAF3; the interaction leads to BIRC2/3-mediated ubiquitination of TRAF3 upon CD40 engagement in a TRAF2-dependent manner. Interacts with MAP3K14/NIK in response to TNF-alpha stimulation; the interaction leads to NF-kappa B activation. Interacts with PEG3; the interaction may promote TRAF2-mediated NF-kappa B activation. Interacts with HIVEP3; the interaction may inhibit TNF-alpha-TRAF2-mediated NF-kappa B and JNK activation. Interacts with TANK/ITRAF; the interaction prevents interaction between TNFRSF1B/TNFR2 and TRAF2. Interacts with deubiquitinating enzyme CYLD; the interaction results in the deubiquitination and inactivation of TRAF2. Interacts with SIAH2; the interaction leads to TRAF2 ubiquitination and degradation. Interacts with E2 conjugating enzyme UBE2N/Ubc13, E3 ligase ITCH and RNF11 in response to TNF-alpha stimulation. Interacts with ubiquitin-editing enzyme TNFAIP3/A20 in response to TNF-alpha stimulation; the interaction promotes TRAF2 dissociation from UBE2N/Ubc13, ITCH, RNF11 and TAX1BP1 and prevents prolonged TRAF-2 ubiquitination. Interacts with TAX1BP1 in response to TNF-alpha stimulation; the interaction promotes TRAF2 dissociation from UBE2N/Ubc13 and TNFAIP3/A20, and prevents prolonged TRAF-2 ubiquitination. Interacts (via C-terminus) with EIF2AK2/PKR (via the kinase catalytic domain). Interacts with deubiquitinating enzyme USP48. Interacts with PTPN2; probably involved in TNF-mediated signaling. Interacts with Toll-like receptor TLR4/3 adapter TICAM1/TRIF; the interaction may promote TICAM1 ubiquitination. Interacts with kinase/endoribonuclease ERN1/IRE1 and DAB2IP in response to ER stress; the interaction requires DAB2IP. Interacts with ERN1/IRE1 and TAOK3 in response to ER stress; the interaction may promote TRAF2 phosphorylation. Interacts (via zinc fingers) with DAB2IP (via C-terminus PER domain) in response to TNF-alpha stimulation. Interacts with CASP8AP2/FLASH. Interacts with NFATC2IP; the interaction may repress IL-4 production in T cells. Interacts with kinase CDK9. Interacts with sphingosine kinase 1 SPHK1. Interacts with kinase TNIK. Interacts with TRAFD1. Interacts with DNA phosphodiesterase TDP2. Interacts with MAVS/IPS1. Interacts with CARD14. Interacts with GPS2. Interacts with XPNPEP3. Interacts with RIPK3. Interacts with RELL2. Interacts with LRRC19. Interacts with GAPDH; promoting TRAF2 ubiquitination. Post-translationally, phosphorylated at several serine residues within the first 128 amino acid residues. Phosphorylated at Thr-117 in response to signaling via TNF and TNFRSF1A. Phosphorylation at Thr-117 is required for 'Lys-63'-linked polyubiquitination, but not for 'Lys-48'-linked polyubiquitination. Phosphorylation at Thr-117 is important for interaction with IKKA and IKKB, activation of IKK and subsequent activation of NF-kappa-B. In terms of processing, undergoes both 'Lys-48'-linked and 'Lys-63'-linked polyubiquitination. Polyubiquitinated via 'Lys-63'-linked ubiquitin in response to TNF signaling; this requires prior phosphorylation at Thr-117. 'Lys-63'-linked polyubiquitination promotes TRAF2-mediated activation of NF-kappa-B. Can be polyubiquitinated at several Lys residues via 'Lys-48'-linked ubiquitin chains in response to TNF signaling, leading to proteasomal degradation. Autoubiquitinated, leading to its subsequent proteasomal degradation. Polyubiquitinated by BIRC2 and SIAH2, leading to its subsequent proteasomal degradation. Not ubiquitinated by BIRC3 or SIAH1. Deubiquitinated by CYLD, a protease that specifically cleaves 'Lys-63'-linked polyubiquitin chains. Ubiquination is inhibited by LRRC19; inhiits proteasomal degradation. Ubiquitinated at Lys-320 by the SCF(FBXL2) complex, leading to its degradation by the proteasome. Ubiquitinated by E3 ubiquitin-protein ligase complex containing FBXO7; leading to repression of NF-kappa-B signaling. As to expression, isoform 1 and isoform 2 are expressed in spleen, adipose tissues, skeletal muscles, thymus, testis, heart, lung, brain. Isoform 2 is very weakly expressed in heart, lung and brain.

The protein localises to the cytoplasm. It catalyses the reaction S-ubiquitinyl-[E2 ubiquitin-conjugating enzyme]-L-cysteine + [acceptor protein]-L-lysine = [E2 ubiquitin-conjugating enzyme]-L-cysteine + N(6)-ubiquitinyl-[acceptor protein]-L-lysine.. It participates in protein modification; protein ubiquitination. Has very low E3 ubiquitin ligase activity in the absence of sphingosine-1-phosphate. E3 ubiquitin ligase activity is strongly activated by cytoplasmic sphingosine-1-phosphate. E3 ubiquitin-protein ligase that regulates activation of NF-kappa-B and JNK and plays a central role in the regulation of cell survival and apoptosis. Catalyzes 'Lys-63'-linked ubiquitination of target proteins, such as BIRC3, IKBKE, MLST8, RIPK1 and TICAM1. Is an essential constituent of several E3 ubiquitin-protein ligase complexes, where it promotes the ubiquitination of target proteins by bringing them into contact with other E3 ubiquitin ligases. Regulates BIRC2 and BIRC3 protein levels by inhibiting their autoubiquitination and subsequent degradation; this does not depend on the TRAF2 RING-type zinc finger domain. Plays a role in mediating activation of NF-kappa-B by EIF2AK2/PKR. In complex with BIRC2 or BIRC3, promotes ubiquitination of IKBKE. Acts as a regulator of mTORC1 and mTORC2 assembly by mediating 'Lys-63'-linked ubiquitination of MLST8, thereby inhibiting formation of the mTORC2 complex, while facilitating assembly of the mTORC1 complex. Required for normal antibody isotype switching from IgM to IgG. The polypeptide is TNF receptor-associated factor 2 (Traf2) (Mus musculus (Mouse)).